The sequence spans 274 residues: Formamidopyrimidine-DNA glycosylase (274 aa).

The active-site Schiff-base intermediate with DNA is P2. E3 (proton donor) is an active-site residue. K56 (proton donor; for beta-elimination activity) is an active-site residue. DNA-binding residues include H89, R107, and K148. The FPG-type zinc finger occupies L233–P267. The Proton donor; for delta-elimination activity role is filled by R257.

Belongs to the FPG family. As to quaternary structure, monomer. It depends on Zn(2+) as a cofactor.

The enzyme catalyses Hydrolysis of DNA containing ring-opened 7-methylguanine residues, releasing 2,6-diamino-4-hydroxy-5-(N-methyl)formamidopyrimidine.. It catalyses the reaction 2'-deoxyribonucleotide-(2'-deoxyribose 5'-phosphate)-2'-deoxyribonucleotide-DNA = a 3'-end 2'-deoxyribonucleotide-(2,3-dehydro-2,3-deoxyribose 5'-phosphate)-DNA + a 5'-end 5'-phospho-2'-deoxyribonucleoside-DNA + H(+). In terms of biological role, involved in base excision repair of DNA damaged by oxidation or by mutagenic agents. Acts as a DNA glycosylase that recognizes and removes damaged bases. Has a preference for oxidized purines, such as 7,8-dihydro-8-oxoguanine (8-oxoG). Has AP (apurinic/apyrimidinic) lyase activity and introduces nicks in the DNA strand. Cleaves the DNA backbone by beta-delta elimination to generate a single-strand break at the site of the removed base with both 3'- and 5'-phosphates. In Acinetobacter baumannii (strain SDF), this protein is Formamidopyrimidine-DNA glycosylase.